Reading from the N-terminus, the 186-residue chain is Nicotinamidase/pyrazinamidase (186 aa).

Asp-8 functions as the Proton acceptor in the catalytic mechanism. The Fe cation site is built by Asp-49, His-51, His-57, and His-71. Residue Lys-96 is part of the active site. The active-site Nucleophile is the Cys-138.

The protein belongs to the isochorismatase family. In terms of assembly, monomer. The cofactor is Mn(2+). Fe(2+) is required as a cofactor.

It catalyses the reaction nicotinamide + H2O = nicotinate + NH4(+). The enzyme catalyses pyrazinamide + H2O = pyrazine-2-carboxylate + NH4(+). The protein operates within cofactor biosynthesis; nicotinate biosynthesis; nicotinate from nicotinamide: step 1/1. With respect to regulation, is inhibited by Cu(2+), Zn(2+) and Fe(3+). Catalyzes the deamidation of nicotinamide (NAM) into nicotinate. Likely functions in the cyclical salvage pathway for production of NAD from nicotinamide. In terms of biological role, is involved in the activation of the first-line antituberculous drug pyrazinamide (PZA) by converting it into the active form, pyrazinoic acid. This Mycobacterium tuberculosis (strain ATCC 25618 / H37Rv) protein is Nicotinamidase/pyrazinamidase.